The primary structure comprises 396 residues: DNA polymerase processivity factor (396 aa).

The segment at 306–396 (AEGGESSQKV…VPKTTFNPLI (91 aa)) is disordered. Positions 376 to 386 (SDSSQSRDRGK) are enriched in basic and acidic residues.

Belongs to the herpesviridae DNA polymerase accessory subunit family. As to quaternary structure, homooligomerizes and adopts an oligomeric ring-shaped structure composed of 6 subunits. Forms a complex with the DNA-binding protein, the DNA polymerase subunit, and the alkaline exonuclease.

The protein localises to the virion tegument. It localises to the host nucleus. In terms of biological role, plays an essential role in the viral lytic DNA replication by acting as the polymerase accessory subunit. Stimulates the viral DNA polymerase activity and appears to function with it as a holoenzyme. Increases the processivity of the viral polymerase, probably by acting as a sliding clamp that prevents dissociation of the polymerase from the active template. The polypeptide is DNA polymerase processivity factor (ORF59) (Homo sapiens (Human)).